A 293-amino-acid chain; its full sequence is 4-hydroxy-tetrahydrodipicolinate synthase (293 aa).

Residue Thr-47 participates in pyruvate binding. The active-site Proton donor/acceptor is the Tyr-135. Residue Lys-163 is the Schiff-base intermediate with substrate of the active site. Ile-204 is a binding site for pyruvate.

The protein belongs to the DapA family. In terms of assembly, homotetramer; dimer of dimers.

It is found in the cytoplasm. It carries out the reaction L-aspartate 4-semialdehyde + pyruvate = (2S,4S)-4-hydroxy-2,3,4,5-tetrahydrodipicolinate + H2O + H(+). It participates in amino-acid biosynthesis; L-lysine biosynthesis via DAP pathway; (S)-tetrahydrodipicolinate from L-aspartate: step 3/4. Catalyzes the condensation of (S)-aspartate-beta-semialdehyde [(S)-ASA] and pyruvate to 4-hydroxy-tetrahydrodipicolinate (HTPA). This Brachyspira hyodysenteriae (strain ATCC 49526 / WA1) protein is 4-hydroxy-tetrahydrodipicolinate synthase.